Here is a 239-residue protein sequence, read N- to C-terminus: MINFLLLVLILSVLESQENVHTDELPKCMFGNNVCAKLQKNFQGTYLQQLCICEDEVCVKMLKNTNRTIAEPLCSRQTCSTSWRSDSHSKSATQGDNQYQFCSDIRNEFTKTCTVNQNAYKEATITTIATNKKEILHHYYCYCPPEFKYVYSTTNRVVNDTHKVESKFFKCEAIPSCNGDEVCKIAVERTNSYTVSKHCLCYNDKICPDDPKEAFSNKTQNDGSTYYEFKCPDLTICIE.

Residues 1 to 16 (MINFLLLVLILSVLES) form the signal peptide.

This sequence belongs to the scoloptoxin-11 family. Contains 9 disulfide bonds. Expressed by the venom gland.

Its subcellular location is the secreted. This chain is U-scoloptoxin(11)-Sm3a, found in Scolopendra morsitans (Tanzanian blue ringleg centipede).